Consider the following 128-residue polypeptide: Saitohin (128 aa).

The disordered stretch occupies residues 77–128 (SYSSEESSRNGAEQGRQLSIEGPFQGQNCPSHPAAALPLPMRGESQATSCQV).

As to quaternary structure, interacts with PRDX6.

It localises to the cytoplasm. Its subcellular location is the nucleus. The protein is Saitohin (STH) of Gorilla gorilla gorilla (Western lowland gorilla).